Consider the following 335-residue polypeptide: Glyceraldehyde-3-phosphate dehydrogenase (335 aa).

NAD(+)-binding positions include 11–12 and glycine 110; that span reads TI. 139–141 provides a ligand contact to D-glyceraldehyde 3-phosphate; that stretch reads SCN. Catalysis depends on cysteine 140, which acts as the Nucleophile. Arginine 168 contributes to the NAD(+) binding site. 194 to 195 is a D-glyceraldehyde 3-phosphate binding site; it reads HG. Glutamine 301 contacts NAD(+).

This sequence belongs to the glyceraldehyde-3-phosphate dehydrogenase family. As to quaternary structure, homotetramer.

Its subcellular location is the cytoplasm. The enzyme catalyses D-glyceraldehyde 3-phosphate + phosphate + NADP(+) = (2R)-3-phospho-glyceroyl phosphate + NADPH + H(+). It catalyses the reaction D-glyceraldehyde 3-phosphate + phosphate + NAD(+) = (2R)-3-phospho-glyceroyl phosphate + NADH + H(+). The protein operates within carbohydrate degradation; glycolysis; pyruvate from D-glyceraldehyde 3-phosphate: step 1/5. This Halobacterium salinarum (strain ATCC 29341 / DSM 671 / R1) protein is Glyceraldehyde-3-phosphate dehydrogenase.